The following is a 263-amino-acid chain: MPEGPEIRRAADNLEAAIKGKPLTDVWFAFPQLKPYQSQLIGQHVTHVETRGKALLTHFSNDLTLYSHNQLYGVWRVVDTGEEPQTTRVLRVKLQTADKTILLYSASDIEMLTPEQLTTHPFLQRVGPDVLDPNLTPEVVKERLLSPRFRNRQFAGLLLDQAFLAGLGNYLRVEILWQVGLTGNHKAKDLNAAQLDALAHALLEIPRFSYATRGQVDENKHHGALFRFKVFHRDGEPCERCGSIIEKTTLSSRPFYWCPGCQH.

The Schiff-base intermediate with DNA role is filled by P2. E3 functions as the Proton donor in the catalytic mechanism. Residue K53 is the Proton donor; for beta-elimination activity of the active site. DNA contacts are provided by Q70, R125, and N169. The segment at 229-263 (KVFHRDGEPCERCGSIIEKTTLSSRPFYWCPGCQH) adopts an FPG-type zinc-finger fold. R253 serves as the catalytic Proton donor; for delta-elimination activity.

The protein belongs to the FPG family. Zn(2+) is required as a cofactor.

The catalysed reaction is 2'-deoxyribonucleotide-(2'-deoxyribose 5'-phosphate)-2'-deoxyribonucleotide-DNA = a 3'-end 2'-deoxyribonucleotide-(2,3-dehydro-2,3-deoxyribose 5'-phosphate)-DNA + a 5'-end 5'-phospho-2'-deoxyribonucleoside-DNA + H(+). Functionally, involved in base excision repair of DNA damaged by oxidation or by mutagenic agents. Acts as a DNA glycosylase that recognizes and removes damaged bases. Has a preference for oxidized pyrimidines, such as thymine glycol, 5,6-dihydrouracil and 5,6-dihydrothymine. Has AP (apurinic/apyrimidinic) lyase activity and introduces nicks in the DNA strand. Cleaves the DNA backbone by beta-delta elimination to generate a single-strand break at the site of the removed base with both 3'- and 5'-phosphates. This chain is Endonuclease 8, found in Escherichia coli (strain K12 / MC4100 / BW2952).